The sequence spans 426 residues: Serine hydroxymethyltransferase (426 aa).

(6S)-5,6,7,8-tetrahydrofolate-binding positions include leucine 121 and glycine 125–leucine 127. Lysine 230 carries the post-translational modification N6-(pyridoxal phosphate)lysine. Serine 354–phenylalanine 356 contributes to the (6S)-5,6,7,8-tetrahydrofolate binding site.

It belongs to the SHMT family. As to quaternary structure, homodimer. Requires pyridoxal 5'-phosphate as cofactor.

The protein resides in the cytoplasm. The catalysed reaction is (6R)-5,10-methylene-5,6,7,8-tetrahydrofolate + glycine + H2O = (6S)-5,6,7,8-tetrahydrofolate + L-serine. It participates in one-carbon metabolism; tetrahydrofolate interconversion. The protein operates within amino-acid biosynthesis; glycine biosynthesis; glycine from L-serine: step 1/1. Catalyzes the reversible interconversion of serine and glycine with tetrahydrofolate (THF) serving as the one-carbon carrier. This reaction serves as the major source of one-carbon groups required for the biosynthesis of purines, thymidylate, methionine, and other important biomolecules. Also exhibits THF-independent aldolase activity toward beta-hydroxyamino acids, producing glycine and aldehydes, via a retro-aldol mechanism. This is Serine hydroxymethyltransferase from Acaryochloris marina (strain MBIC 11017).